A 438-amino-acid polypeptide reads, in one-letter code: Histidine--tRNA ligase (438 aa).

This sequence belongs to the class-II aminoacyl-tRNA synthetase family. Homodimer.

The protein resides in the cytoplasm. It carries out the reaction tRNA(His) + L-histidine + ATP = L-histidyl-tRNA(His) + AMP + diphosphate + H(+). This chain is Histidine--tRNA ligase, found in Blochmanniella pennsylvanica (strain BPEN).